The chain runs to 319 residues: Nucleotide-binding protein Rru_A3448 (319 aa).

Residues 1–34 (MGRSASLLRLRDPAPLPTDIAPDPAEAPPSPAAD) form a disordered region. 42 to 49 (GMSGAGRT) provides a ligand contact to ATP. 90–93 (DTRT) is a binding site for GTP.

It belongs to the RapZ-like family.

Its function is as follows. Displays ATPase and GTPase activities. The protein is Nucleotide-binding protein Rru_A3448 of Rhodospirillum rubrum (strain ATCC 11170 / ATH 1.1.1 / DSM 467 / LMG 4362 / NCIMB 8255 / S1).